The following is a 186-amino-acid chain: Ribosome-recycling factor (186 aa).

Belongs to the RRF family.

Its subcellular location is the cytoplasm. Its function is as follows. Responsible for the release of ribosomes from messenger RNA at the termination of protein biosynthesis. May increase the efficiency of translation by recycling ribosomes from one round of translation to another. This is Ribosome-recycling factor from Bacteroides fragilis (strain ATCC 25285 / DSM 2151 / CCUG 4856 / JCM 11019 / LMG 10263 / NCTC 9343 / Onslow / VPI 2553 / EN-2).